The primary structure comprises 193 residues: Large ribosomal subunit protein uL5 (193 aa).

The protein belongs to the universal ribosomal protein uL5 family. In terms of assembly, part of the 50S ribosomal subunit; part of the 5S rRNA/L5/L18/L25 subcomplex. Contacts the 5S rRNA and the P site tRNA. Forms a bridge to the 30S subunit in the 70S ribosome.

Functionally, this is one of the proteins that bind and probably mediate the attachment of the 5S RNA into the large ribosomal subunit, where it forms part of the central protuberance. In the 70S ribosome it contacts protein S13 of the 30S subunit (bridge B1b), connecting the 2 subunits; this bridge is implicated in subunit movement. Contacts the P site tRNA; the 5S rRNA and some of its associated proteins might help stabilize positioning of ribosome-bound tRNAs. This chain is Large ribosomal subunit protein uL5, found in Rhizorhabdus wittichii (strain DSM 6014 / CCUG 31198 / JCM 15750 / NBRC 105917 / EY 4224 / RW1) (Sphingomonas wittichii).